A 210-amino-acid chain; its full sequence is Pre-mRNA-splicing factor 38 (210 aa).

The tract at residues 181-210 is disordered; it reads PLSSSSDEEDDDEEQISKLESNEGAVDRNI. The segment covering 195–210 has biased composition (basic and acidic residues); sequence QISKLESNEGAVDRNI.

The protein belongs to the PRP38 family. Component of the 25S U4/U6.U5 tri-snRNP particle, a subcomplex of the spliceosome.

It localises to the nucleus. In terms of biological role, required for pre-mRNA splicing and maintenance of stable U6 small nuclear RNA levels. Implicated in the formation of stable and biologically active snRNP structures. As part of the U4/U6.U5 tri-snRNP particle, dispensible for spliceosome assembly, but required for conformational changes, which result in U4 snRNA release and the subsequent catalytic activation of the spliceosome. This Schizosaccharomyces pombe (strain 972 / ATCC 24843) (Fission yeast) protein is Pre-mRNA-splicing factor 38.